The following is a 232-amino-acid chain: Orotidine 5'-phosphate decarboxylase (232 aa).

Residues aspartate 13, lysine 35, 62–71, threonine 121, arginine 182, glutamine 191, glycine 211, and arginine 212 each bind substrate; that span reads DLKFHDIPNT. Lysine 64 functions as the Proton donor in the catalytic mechanism.

This sequence belongs to the OMP decarboxylase family. Type 1 subfamily. Homodimer.

The catalysed reaction is orotidine 5'-phosphate + H(+) = UMP + CO2. Its pathway is pyrimidine metabolism; UMP biosynthesis via de novo pathway; UMP from orotate: step 2/2. Functionally, catalyzes the decarboxylation of orotidine 5'-monophosphate (OMP) to uridine 5'-monophosphate (UMP). In Acinetobacter baumannii (strain AB0057), this protein is Orotidine 5'-phosphate decarboxylase.